Reading from the N-terminus, the 472-residue chain is Mixed lineage kinase domain-like protein (472 aa).

The segment at 1–143 (MDKLGQIIKL…QEDRQDAEED (143 aa)) is N-terminal bundle and brace (NBB); mediates INSP6 binding. Residues 61–81 (LGRFDEVLKEANQQIEKFSKK) adopt a coiled-coil conformation. Ser-124 carries the post-translational modification Phosphoserine. A coiled-coil region spans residues 138-229 (QDAEEDGNEN…VFNNPQAESV (92 aa)). The region spanning 192 to 456 (GPPWTKLKTS…DGRSLSGRER (265 aa)) is the Protein kinase domain. Residues 198 to 206 (LKTSKMSTI) and Lys-219 each bind ATP. Phosphoserine; by RIPK3 is present on residues Ser-345 and Ser-347. Position 349 is a phosphothreonine; by RIPK3 (Thr-349). Position 352 is a phosphoserine; by RIPK3 (Ser-352).

Belongs to the protein kinase superfamily. In terms of assembly, homooligomer. Homotrimer; forms homotrimers on necroptosis induction. Upon TNF-induced necrosis, forms in complex with PGAM5, RIPK1 and RIPK3. Within this complex, may play a role in the proper targeting of RIPK1-RIPK3 to its downstream effector PGAM5. Interacts with RIPK3; the interaction is direct and promotes its phosphorylation and subsequent activation. Post-translationally, phosphorylation by RIPK3 induces a conformational switch that is required for necroptosis. It also induces homotrimerization and localization to the plasma membrane. In terms of tissue distribution, highly expressed in thymus, colon, intestine, liver, spleen and lung. Expressed at much lower level in skeletal muscle, heart and kidney. Not detected in brain.

The protein resides in the cytoplasm. The protein localises to the cell membrane. Its subcellular location is the nucleus. Activated via binding to highly phosphorylated inositol phosphates such as inositolhexakisphosphate (InsP6) which mediates the release of an N-terminal auto-inhibitory region. Activation requires not only RIPK3-dependent phosphorylation but also binding to highly phosphorylated inositol phosphates. Functionally, pseudokinase that plays a key role in TNF-induced necroptosis, a programmed cell death process. Does not have protein kinase activity. Activated following phosphorylation by RIPK3, leading to homotrimerization, localization to the plasma membrane and execution of programmed necrosis characterized by calcium influx and plasma membrane damage. In addition to TNF-induced necroptosis, necroptosis can also take place in the nucleus in response to orthomyxoviruses infection: following ZBP1 activation, which senses double-stranded Z-RNA structures, nuclear RIPK3 catalyzes phosphorylation and activation of MLKL, promoting disruption of the nuclear envelope and leakage of cellular DNA into the cytosol. Binds to highly phosphorylated inositol phosphates such as inositolhexakisphosphate (InsP6) which is essential for its necroptotic function. The chain is Mixed lineage kinase domain-like protein from Mus musculus (Mouse).